The chain runs to 565 residues: MGLYPLIWLSLAACTAWGYPSSPPVVNTVKGKVLGKYVNLEGFTQPVAVFLGVPFAKPPLGSLRFAPPQPAEPWSFVKNTTSYPPMCSQDAVGGQVLSELFTNRKENIPLQFSEDCLYLNIYTPADLTKNSRLPVMVWIHGGGLVVGGASTYDGLALSAHENVVVVTIQYRLGIWGFFSTGDEHSRGNWGHLDQVAALRWVQDNIANFGGNPGSVTIFGESAGGFSVSVLVLSPLAKNLFHRAISESGVSLTAALITTDVKPIAGLVATLSGCKTTTSAVMVHCLRQKTEDELLETSLKLNLFKLDLLGNPKESYPFLPTVIDGVVLPKAPEEILAEKSFSTVPYIVGINKQEFGWIIPTLMGYPLAEGKLDQKTANSLLWKSYPTLKISENMIPVVAEKYLGGTDDLTKKKDLFQDLMADVVFGVPSVIVSRSHRDAGASTYMYEFEYRPSFVSAMRPKAVIGDHGDEIFSVFGSPFLKDGASEEETNLSKMVMKFWANFARNGNPNGGGLPHWPEYDQKEGYLKIGASTQAAQRLKDKEVSFWAELRAKESAQRPSHREHVEL.

The N-terminal stretch at 1–18 (MGLYPLIWLSLAACTAWG) is a signal peptide. An N-linked (GlcNAc...) asparagine glycan is attached at Asn79. Cys87 and Cys116 are joined by a disulfide. Ser221 serves as the catalytic Acyl-ester intermediate. A disulfide bond links Cys273 and Cys284. The active-site Charge relay system is the Glu353. Lys382 carries the N6-succinyllysine modification. The active-site Charge relay system is His466. Asn489 is a glycosylation site (N-linked (GlcNAc...) asparagine). The Prevents secretion from ER motif lies at 562 to 565 (HVEL).

The protein belongs to the type-B carboxylesterase/lipase family. As to quaternary structure, homotrimer. As to expression, highest expression occurs in liver with lower levels in adipose tissue, kidney, heart, intestine, lung, testis and thymus.

The protein resides in the endoplasmic reticulum lumen. Its subcellular location is the cytoplasm. It localises to the cytosol. It is found in the lipid droplet. The protein localises to the microsome. The catalysed reaction is a carboxylic ester + H2O = an alcohol + a carboxylate + H(+). It catalyses the reaction a long-chain fatty acyl ethyl ester + H2O = a long-chain fatty acid + ethanol + H(+). The enzyme catalyses all-trans-retinyl hexadecanoate + H2O = all-trans-retinol + hexadecanoate + H(+). Major lipase in white adipose tissue. Involved in the metabolism of xenobiotics and of natural substrates. Hydrolyzes triacylglycerols and monoacylglycerols, with a preference for monoacylglycerols. The susceptibility of the substrate increases with decreasing acyl chain length of the fatty acid moiety. Catalyzes the synthesis of fatty acid ethyl esters. Hydrolyzes retinyl esters. In Mus musculus (Mouse), this protein is Carboxylesterase 1D.